Consider the following 1894-residue polypeptide: Plexin-A2 (1894 aa).

Residues 1 to 34 (MEQRRFYLRAMQADNLSVVLLSVAWLLLARGTTG) form the signal peptide. N-linked (GlcNAc...) asparagine glycosylation is found at Asn15 and Asn76. Residues 35–508 (MPQYSTFHSE…SERQVTRVPV (474 aa)) form the Sema domain. The Extracellular segment spans residues 35 to 1237 (MPQYSTFHSE…VISDSLLTLP (1203 aa)). 2 cysteine pairs are disulfide-bonded: Cys94-Cys103 and Cys129-Cys137. N-linked (GlcNAc...) asparagine glycans are attached at residues Asn163 and Asn327. 8 cysteine pairs are disulfide-bonded: Cys284-Cys405, Cys300-Cys356, Cys374-Cys393, Cys511-Cys528, Cys517-Cys559, Cys520-Cys537, Cys531-Cys543, and Cys594-Cys613. 3 N-linked (GlcNAc...) asparagine glycosylation sites follow: Asn598, Asn696, and Asn756. IPT/TIG domains follow at residues 858–951 (PQIT…QYTF), 954–1037 (PSVL…QFEY), 1041–1139 (PRVQ…KFIY), and 1143–1228 (PTFE…SVSV). N-linked (GlcNAc...) asparagine glycosylation is found at Asn1180 and Asn1205. Residues 1238–1258 (AIISIAAGGSLLLIIVIIVLI) form a helical membrane-spanning segment. Topologically, residues 1259–1894 (AYKRKSREND…HLINAMSIES (636 aa)) are cytoplasmic. Residues 1261–1310 (KRKSRENDLTLKRLQMQMDNLESRVALECKEAFAELQTDINELTSDLDRS) adopt a coiled-coil conformation. Ser1612 carries the post-translational modification Phosphoserine.

Belongs to the plexin family. In terms of assembly, homodimer. Interacts with RND1. Interacts directly with NRP1 and NRP2. The PLXNA2 homodimer interacts with a SEMA6A homodimer, giving rise to a heterotetramer.

The protein resides in the cell membrane. Functionally, coreceptor for SEMA3A and SEMA6A. Necessary for signaling by SEMA6A and class 3 semaphorins and subsequent remodeling of the cytoskeleton. Plays a role in axon guidance, invasive growth and cell migration. Class 3 semaphorins bind to a complex composed of a neuropilin and a plexin. The plexin modulates the affinity of the complex for specific semaphorins, and its cytoplasmic domain is required for the activation of down-stream signaling events in the cytoplasm. The polypeptide is Plexin-A2 (Plxna2) (Mus musculus (Mouse)).